The chain runs to 273 residues: Dermonecrotic toxin LapSicTox-alphaIB1bi (273 aa).

The active site involves His-5. Positions 25 and 27 each coordinate Mg(2+). The active-site Nucleophile is the His-41. Intrachain disulfides connect Cys-45-Cys-51 and Cys-47-Cys-190. Asp-85 is a Mg(2+) binding site. Asn-189 and Asn-250 each carry an N-linked (GlcNAc...) asparagine glycan.

This sequence belongs to the arthropod phospholipase D family. Class II subfamily. It depends on Mg(2+) as a cofactor. In terms of tissue distribution, expressed by the venom gland.

It is found in the secreted. It carries out the reaction an N-(acyl)-sphingosylphosphocholine = an N-(acyl)-sphingosyl-1,3-cyclic phosphate + choline. The catalysed reaction is an N-(acyl)-sphingosylphosphoethanolamine = an N-(acyl)-sphingosyl-1,3-cyclic phosphate + ethanolamine. The enzyme catalyses a 1-acyl-sn-glycero-3-phosphocholine = a 1-acyl-sn-glycero-2,3-cyclic phosphate + choline. It catalyses the reaction a 1-acyl-sn-glycero-3-phosphoethanolamine = a 1-acyl-sn-glycero-2,3-cyclic phosphate + ethanolamine. In terms of biological role, dermonecrotic toxins cleave the phosphodiester linkage between the phosphate and headgroup of certain phospholipids (sphingolipid and lysolipid substrates), forming an alcohol (often choline) and a cyclic phosphate. This toxin acts on sphingomyelin (SM). It may also act on ceramide phosphoethanolamine (CPE), lysophosphatidylcholine (LPC) and lysophosphatidylethanolamine (LPE), but not on lysophosphatidylserine (LPS), and lysophosphatidylglycerol (LPG). It acts by transphosphatidylation, releasing exclusively cyclic phosphate products as second products. Induces dermonecrosis, hemolysis, increased vascular permeability, edema, inflammatory response, and platelet aggregation. This is Dermonecrotic toxin LapSicTox-alphaIB1bi from Loxosceles apachea (Apache recluse spider).